We begin with the raw amino-acid sequence, 245 residues long: NAD-dependent protein deacylase 1 (245 aa).

One can recognise a Deacetylase sirtuin-type domain in the interval 1–243; the sequence is MDEKLLKTIA…DELVRHVRKA (243 aa). 20–39 provides a ligand contact to NAD(+); the sequence is GAGVSAESGIPTFRGKDGLW. 2 residues coordinate substrate: Y64 and R67. 98–101 contributes to the NAD(+) binding site; it reads QNVD. Catalysis depends on H116, which acts as the Proton acceptor. C124, C127, C145, and C148 together coordinate Zn(2+). Residues 185–187, 211–213, and A229 each bind NAD(+); these read GTS and NPD.

The protein belongs to the sirtuin family. Class III subfamily. It depends on Zn(2+) as a cofactor.

The protein localises to the cytoplasm. It catalyses the reaction N(6)-acetyl-L-lysyl-[protein] + NAD(+) + H2O = 2''-O-acetyl-ADP-D-ribose + nicotinamide + L-lysyl-[protein]. The catalysed reaction is N(6)-succinyl-L-lysyl-[protein] + NAD(+) + H2O = 2''-O-succinyl-ADP-D-ribose + nicotinamide + L-lysyl-[protein]. Functionally, NAD-dependent lysine deacetylase and desuccinylase that specifically removes acetyl and succinyl groups on target proteins. Modulates the activities of several proteins which are inactive in their acylated form. Deacetylates the N-terminal lysine residue of Alba, the major archaeal chromatin protein and that, in turn, increases Alba's DNA binding affinity, thereby repressing transcription. The chain is NAD-dependent protein deacylase 1 from Archaeoglobus fulgidus (strain ATCC 49558 / DSM 4304 / JCM 9628 / NBRC 100126 / VC-16).